The sequence spans 429 residues: Serine--tRNA ligase (429 aa).

235–237 (TAE) serves as a coordination point for L-serine. 266–268 (RSE) contributes to the ATP binding site. Residue E289 coordinates L-serine. 353–356 (EISS) is an ATP binding site. S389 contacts L-serine.

The protein belongs to the class-II aminoacyl-tRNA synthetase family. Type-1 seryl-tRNA synthetase subfamily. In terms of assembly, homodimer. The tRNA molecule binds across the dimer.

The protein resides in the cytoplasm. The catalysed reaction is tRNA(Ser) + L-serine + ATP = L-seryl-tRNA(Ser) + AMP + diphosphate + H(+). It carries out the reaction tRNA(Sec) + L-serine + ATP = L-seryl-tRNA(Sec) + AMP + diphosphate + H(+). It functions in the pathway aminoacyl-tRNA biosynthesis; selenocysteinyl-tRNA(Sec) biosynthesis; L-seryl-tRNA(Sec) from L-serine and tRNA(Sec): step 1/1. Functionally, catalyzes the attachment of serine to tRNA(Ser). Is also able to aminoacylate tRNA(Sec) with serine, to form the misacylated tRNA L-seryl-tRNA(Sec), which will be further converted into selenocysteinyl-tRNA(Sec). The polypeptide is Serine--tRNA ligase (Histophilus somni (strain 2336) (Haemophilus somnus)).